Here is a 1012-residue protein sequence, read N- to C-terminus: Klotho (1012 aa).

The first 33 residues, 1–33 (MPASAPPRRPRPPPPSLSLLLVLLGLGGRRLRA), serve as a signal peptide directing secretion. Residues 34–981 (EPGDGAQTWA…ECSFFHTRKS (948 aa)) lie on the Extracellular side of the membrane. 2 glycosyl hydrolase-1 regions span residues 57-506 (FQGT…KNGF) and 515-953 (LEGT…SNGF). N-linked (GlcNAc...) asparagine glycosylation is found at Asn106, Asn159, Asn283, Asn344, Asn607, Asn612, and Asn694. The helical transmembrane segment at 982–1002 (LLAFIAFLFFASIISLSLIFY) threads the bilayer. The Cytoplasmic portion of the chain corresponds to 1003 to 1012 (YSKKGRRSYK).

It belongs to the glycosyl hydrolase 1 family. Klotho subfamily. Homodimer. Interacts with FGF23 and FGFR1. In terms of processing, N-glycosylated. Present in cortical renal tubules (at protein level). Soluble peptide is present in serum and cerebrospinal fluid. Expressed in kidney, placenta, small intestine and prostate. Down-regulated in renal cell carcinomas, hepatocellular carcinomas, and in chronic renal failure kidney.

Its subcellular location is the cell membrane. It localises to the apical cell membrane. It is found in the secreted. It catalyses the reaction a beta-D-glucuronoside + H2O = D-glucuronate + an alcohol. Its function is as follows. May have weak glycosidase activity towards glucuronylated steroids. However, it lacks essential active site Glu residues at positions 239 and 872, suggesting it may be inactive as a glycosidase in vivo. May be involved in the regulation of calcium and phosphorus homeostasis by inhibiting the synthesis of active vitamin D. Essential factor for the specific interaction between FGF23 and FGFR1. The Klotho peptide generated by cleavage of the membrane-bound isoform may be an anti-aging circulating hormone which would extend life span by inhibiting insulin/IGF1 signaling. This is Klotho (KL) from Homo sapiens (Human).